A 205-amino-acid chain; its full sequence is MTKIVRSKYKASRRLGVSLWGDSKDAFNIRNYRPGQHGQNTMIKTSDYGLHLKAKQRLKCHYGRVTEKQFRNIFELAQKMKGNTGENFIGLLESRLDTVVYRMNIAPTIFAARQLVSHGHIKLNGKKADIASIRLKEGDVVEVKESIKQIALIQESILKQGQTTPNYLSFDVPSLTGKYLRVPNLSDVPYPFEAEVHLVIELYSR.

The 64-residue stretch at 94 to 157 (SRLDTVVYRM…KQIALIQESI (64 aa)) folds into the S4 RNA-binding domain.

The protein belongs to the universal ribosomal protein uS4 family. As to quaternary structure, part of the 30S ribosomal subunit. Contacts protein S5. The interaction surface between S4 and S5 is involved in control of translational fidelity.

Functionally, one of the primary rRNA binding proteins, it binds directly to 16S rRNA where it nucleates assembly of the body of the 30S subunit. In terms of biological role, with S5 and S12 plays an important role in translational accuracy. This Rickettsia canadensis (strain McKiel) protein is Small ribosomal subunit protein uS4.